A 281-amino-acid chain; its full sequence is MAQKIIRTGSIEIANDKPMVVFGGMNVLESRDMAMQVCEEYVRVTEKLGIPYVFKASFDKANRSSVNSYRGPGLEEGMRIFEEIKRTFNVPLITDVHEPHQAAVVAEVCDIIQLPAFLSRQTDLVVAMAKTGAIINIKKAQFLAPQEMKHILTKCEEAGNDQLILCERGSSFGYNNLVVDMLGFGIMKQFEYPVLFDVTHALQMPGGRSDSAGGRRAQVLDLAKAGISQNLAGLFLEAHPDPDNAKCDGPCALRLDKLEPFLAQLKSLDELVKSFPIVETA.

This sequence belongs to the KdsA family.

The protein resides in the cytoplasm. It catalyses the reaction D-arabinose 5-phosphate + phosphoenolpyruvate + H2O = 3-deoxy-alpha-D-manno-2-octulosonate-8-phosphate + phosphate. The protein operates within carbohydrate biosynthesis; 3-deoxy-D-manno-octulosonate biosynthesis; 3-deoxy-D-manno-octulosonate from D-ribulose 5-phosphate: step 2/3. It participates in bacterial outer membrane biogenesis; lipopolysaccharide biosynthesis. The chain is 2-dehydro-3-deoxyphosphooctonate aldolase from Pseudomonas syringae pv. tomato (strain ATCC BAA-871 / DC3000).